A 365-amino-acid polypeptide reads, in one-letter code: Isopentenyl-diphosphate delta-isomerase (365 aa).

8–9 serves as a coordination point for substrate; that stretch reads RK. FMN is bound by residues 67 to 69, Ser97, and Asn126; that span reads SIT. 97-99 is a binding site for substrate; sequence SQR. Residue Gln160 participates in substrate binding. Glu161 serves as a coordination point for Mg(2+). FMN is bound by residues Lys192, Thr222, 272-274, and 293-294; these read GIR and AL.

This sequence belongs to the IPP isomerase type 2 family. As to quaternary structure, homooctamer. Dimer of tetramers. It depends on FMN as a cofactor. NADPH serves as cofactor. The cofactor is Mg(2+).

The protein resides in the cytoplasm. It catalyses the reaction isopentenyl diphosphate = dimethylallyl diphosphate. Involved in the biosynthesis of isoprenoids. Catalyzes the 1,3-allylic rearrangement of the homoallylic substrate isopentenyl (IPP) to its allylic isomer, dimethylallyl diphosphate (DMAPP). In Methanosarcina mazei (strain ATCC BAA-159 / DSM 3647 / Goe1 / Go1 / JCM 11833 / OCM 88) (Methanosarcina frisia), this protein is Isopentenyl-diphosphate delta-isomerase.